Here is a 447-residue protein sequence, read N- to C-terminus: N-succinylarginine dihydrolase (447 aa).

Substrate contacts are provided by residues 19-28 (AGLSFGNEAS), asparagine 110, and 137-138 (HR). Glutamate 174 is an active-site residue. Arginine 212 is a substrate binding site. Residue histidine 248 is part of the active site. Substrate is bound by residues aspartate 250 and asparagine 359. The Nucleophile role is filled by cysteine 365.

It belongs to the succinylarginine dihydrolase family. Homodimer.

It catalyses the reaction N(2)-succinyl-L-arginine + 2 H2O + 2 H(+) = N(2)-succinyl-L-ornithine + 2 NH4(+) + CO2. Its pathway is amino-acid degradation; L-arginine degradation via AST pathway; L-glutamate and succinate from L-arginine: step 2/5. Functionally, catalyzes the hydrolysis of N(2)-succinylarginine into N(2)-succinylornithine, ammonia and CO(2). The polypeptide is N-succinylarginine dihydrolase (Salmonella heidelberg (strain SL476)).